The following is a 78-amino-acid chain: Apolipoprotein C-I (78 aa).

The first 26 residues, 1 to 26 (MRLILWLPVLVVVLLMVLEGPAPAQG), serve as a signal peptide directing secretion.

Belongs to the apolipoprotein C1 family.

It is found in the secreted. Inhibitor of lipoprotein binding to the low density lipoprotein (LDL) receptor, LDL receptor-related protein, and very low density lipoprotein (VLDL) receptor. Associates with high density lipoproteins (HDL) and the triacylglycerol-rich lipoproteins in the plasma and makes up about 10% of the protein of the VLDL and 2% of that of HDL. Appears to interfere directly with fatty acid uptake and is also the major plasma inhibitor of cholesteryl ester transfer protein (CETP). Binds free fatty acids and reduces their intracellular esterification. Modulates the interaction of APOE with beta-migrating VLDL and inhibits binding of beta-VLDL to the LDL receptor-related protein. In Lynx pardinus (Iberian lynx), this protein is Apolipoprotein C-I (APOC1).